We begin with the raw amino-acid sequence, 455 residues long: Ribosome biogenesis protein NOP53 (455 aa).

A compositionally biased stretch (polar residues) spans 1-15; it reads MAPTNLTKKPSQYKQ. The tract at residues 1-25 is disordered; the sequence is MAPTNLTKKPSQYKQSSRKGKKAWR. The span at 16-25 shows a compositional bias: basic residues; that stretch reads SSRKGKKAWR. Ser-31 carries the phosphoserine modification. Residues 264–333 are disordered; that stretch reads HLMETLDDNE…RNKAKRHEEK (70 aa). The span at 268–294 shows a compositional bias: acidic residues; sequence TLDDNEEEESSSNEEEEEEEEENENEN. Basic residues predominate over residues 314–328; it reads VKNKKKTKYQRNKAK.

Belongs to the NOP53 family. Interacts with CBF5, FPR3, FPR4, NOP2, PIH1, RRN3, RRP6 and PAP2. Interacts with pre-60S ribosomal particles.

The protein resides in the nucleus. The protein localises to the nucleolus. It is found in the nucleoplasm. Its function is as follows. Late-acting factor in the nuclear maturation of 60S ribosomal subunits, which is required for normal acquisition of export competence. Required for the export of the large subunit. Acts to stimulate the RNase activity of the exosome complex, and may recruit the exosome to 7S pre-rRNA for processing. Associates with numerous RNAs including the 27S and 7S pre-rRNAs and the box H/ACA snoRNA snR37. Also interacts (via N-terminal region) with the mature 25S rRNA and the mature 5.8S rRNA. This chain is Ribosome biogenesis protein NOP53, found in Saccharomyces cerevisiae (strain ATCC 204508 / S288c) (Baker's yeast).